The primary structure comprises 182 residues: UPF0423 protein BRA0381/BS1330_II0378 (182 aa).

An N-terminal signal peptide occupies residues 1–24 (MKNLFRTAALMVPLSLALAYGAQA).

Belongs to the UPF0423 family.

In Brucella suis biovar 1 (strain 1330), this protein is UPF0423 protein BRA0381/BS1330_II0378.